We begin with the raw amino-acid sequence, 67 residues long: Ferredoxin (67 aa).

2 consecutive 4Fe-4S ferredoxin-type domains span residues 3–31 and 36–67; these read WKVS…MNDE and PKVE…IEEA. [4Fe-4S] cluster-binding residues include C12, D15, and C18. Cysteines 22 and 49 form a disulfide. C57 is a [4Fe-4S] cluster binding site.

Requires [4Fe-4S] cluster as cofactor. [3Fe-4S] cluster is required as a cofactor.

Its function is as follows. Ferredoxins are iron-sulfur proteins that transfer electrons in a wide variety of metabolic reactions. The chain is Ferredoxin (fdxA) from Pyrococcus abyssi (strain GE5 / Orsay).